The primary structure comprises 165 residues: Transcriptional repressor NrdR (165 aa).

A zinc finger lies at 3–34 (CPFCRNPDSRVVDSRMADDGSAIRRRRQCPEC). One can recognise an ATP-cone domain in the interval 46-136 (LTVIKRSGVG…VYQAFESLED (91 aa)).

Belongs to the NrdR family. Requires Zn(2+) as cofactor.

Its function is as follows. Negatively regulates transcription of bacterial ribonucleotide reductase nrd genes and operons by binding to NrdR-boxes. This chain is Transcriptional repressor NrdR, found in Arthrobacter sp. (strain FB24).